The following is a 549-amino-acid chain: FMRFamide receptor (549 aa).

Residues 1-117 (MSGTAVARLL…NNRIEFWVCG (117 aa)) are Extracellular-facing. N-linked (GlcNAc...) asparagine glycans are attached at residues N59, N70, and N93. The chain crosses the membrane as a helical span at residues 118-138 (VLINIVGVLGILGNIISMIIL). The Cytoplasmic portion of the chain corresponds to 139-158 (SRPQMRSSINYLLTGLARCD). A helical membrane pass occupies residues 159–179 (TVLIITSILLFGIPSIYPYTG). Topologically, residues 180-181 (HF) are extracellular. A helical transmembrane segment spans residues 182–202 (FGYYNYVYPFISPAVFPIGMI). Residues 203–238 (AQTASIYMTFTVTLERYVAVCHPLKARALCTYGRAK) lie on the Cytoplasmic side of the membrane. The chain crosses the membrane as a helical span at residues 239 to 259 (IYFIVCVCFSLAYNMPRFWEV). Topologically, residues 260 to 289 (LTVTYPEPGKDVILHCVRPSRLRRSETYIN) are extracellular. A helical membrane pass occupies residues 290–310 (IYIHWCYLIVNYIIPFLTLAI). The Cytoplasmic portion of the chain corresponds to 311-341 (LNCLIYRQVKRANRERQRLSRSEKREIGLAT). The helical transmembrane segment at 342–362 (MLLCVVIVFFMLNFLPLVLNI) threads the bilayer. Over 363–376 (SEAFYSTIDHKITK) the chain is Extracellular. Residues 377–397 (ISNLLITINSSVNFLIYIIFG) traverse the membrane as a helical segment. Topologically, residues 398–549 (EKFKRIFLLI…KKLGHVSSGF (152 aa)) are cytoplasmic.

Belongs to the G-protein coupled receptor 1 family. As to expression, expressed in ovaries, heads and bodies. Expressed in dopaminergic neurons.

It localises to the cell membrane. Its function is as follows. A receptor for the FMRFamide peptides. Reacts with high affinity to FMRFamide and intrinsic FMRFamide-related peptides. By stimulating intracellular calcium signaling through the inositol 1,4,5-trisphosphate receptor, Itpr, in dopaminergic neurons, may be involved in the maintenance of neuronal excitability and in the regulation of flight bout duration. This is FMRFamide receptor from Drosophila melanogaster (Fruit fly).